A 256-amino-acid polypeptide reads, in one-letter code: Tumor necrosis factor receptor superfamily member 9 (256 aa).

An N-terminal signal peptide occupies residues 1–23 (MGNNCYNVVVIVLLLVGCEKVGA). TNFR-Cys repeat units follow at residues 24-45 (VQNS…PVCK), 46-85 (SCPP…NAEC), 86-117 (ECIE…QGCK), and 118-159 (TCSL…VVCG). The Extracellular portion of the chain corresponds to 24–187 (VQNSCDNCQP…GPGGHSLQVL (164 aa)). Intrachain disulfides connect Cys28–Cys37, Cys31–Cys44, Cys47–Cys61, Cys64–Cys77, Cys67–Cys85, Cys87–Cys93, Cys98–Cys105, Cys101–Cys116, and Cys119–Cys133. 2 N-linked (GlcNAc...) asparagine glycosylation sites follow: Asn128 and Asn138. Cys139 and Cys158 are disulfide-bonded. The helical transmembrane segment at 188–208 (TLFLALTSALLLALIFITLLF) threads the bilayer. At 209–256 (SVLKWIRKKFPHIFKQPFKKTTGAAQEEDACSCRCPQEEEGGGGGYEL) the chain is on the cytoplasmic side.

Predominantly homodimeric, but may also exist as a monomer. Associates with p56-LCK. Interacts with TRAF1, TRAF2 and TRAF3. As to expression, expressed in activated thymocytes, splenic T cells, CD4(+), and CD8(+) T-cells.

It localises to the cell membrane. Receptor for TNFSF9/4-1BBL. Conveys a signal that enhances CD8(+) T-cell survival, cytotoxicity, and mitochondrial activity, thereby promoting immunity against viruses and tumors. The protein is Tumor necrosis factor receptor superfamily member 9 (Tnfrsf9) of Mus musculus (Mouse).